The chain runs to 211 residues: Protein-L-isoaspartate O-methyltransferase (211 aa).

Serine 60 is a catalytic residue.

Belongs to the methyltransferase superfamily. L-isoaspartyl/D-aspartyl protein methyltransferase family.

It is found in the cytoplasm. It catalyses the reaction [protein]-L-isoaspartate + S-adenosyl-L-methionine = [protein]-L-isoaspartate alpha-methyl ester + S-adenosyl-L-homocysteine. Its function is as follows. Catalyzes the methyl esterification of L-isoaspartyl residues in peptides and proteins that result from spontaneous decomposition of normal L-aspartyl and L-asparaginyl residues. It plays a role in the repair and/or degradation of damaged proteins. The sequence is that of Protein-L-isoaspartate O-methyltransferase from Pseudomonas fluorescens (strain SBW25).